A 463-amino-acid chain; its full sequence is Asparagine--tRNA ligase (463 aa).

The protein belongs to the class-II aminoacyl-tRNA synthetase family. Homodimer.

It is found in the cytoplasm. The catalysed reaction is tRNA(Asn) + L-asparagine + ATP = L-asparaginyl-tRNA(Asn) + AMP + diphosphate + H(+). The polypeptide is Asparagine--tRNA ligase (Bacillus thuringiensis subsp. konkukian (strain 97-27)).